The primary structure comprises 138 residues: Thyrotropin subunit beta (138 aa).

The N-terminal stretch at 1 to 20 (MTAIYLMSMLFGLACGQAMS) is a signal peptide. Disulfide bonds link cysteine 22–cysteine 72, cysteine 36–cysteine 87, cysteine 39–cysteine 125, cysteine 47–cysteine 103, cysteine 51–cysteine 105, and cysteine 108–cysteine 115. A glycan (N-linked (GlcNAc...) asparagine) is linked at asparagine 43. Positions 133–138 (VVGFSI) are excised as a propeptide.

The protein belongs to the glycoprotein hormones subunit beta family. In terms of assembly, heterodimer of a common alpha chain and a unique beta chain which confers biological specificity to thyrotropin, lutropin, follitropin and gonadotropin.

Its subcellular location is the secreted. Its function is as follows. Indispensable for the control of thyroid structure and metabolism. The sequence is that of Thyrotropin subunit beta (TSHB) from Canis lupus familiaris (Dog).